An 87-amino-acid polypeptide reads, in one-letter code: Cyclin-dependent kinases regulatory subunit 1 (87 aa).

It belongs to the CKS family. Interacts with CDKA-1. Interacts with CDKB1-1, CDKB1-2 and CDKB2-1. Interacts with CYCD2-1 and At4g14310.

Associates with cyclin-dependent kinases (CDKs) and plays an essential role in the regulation of the cell cycle that affects plant growth rate. May inhibit both the G1/S and G2/M phases. The polypeptide is Cyclin-dependent kinases regulatory subunit 1 (CKS1) (Arabidopsis thaliana (Mouse-ear cress)).